The following is an 80-amino-acid chain: Crustacean hyperglycemic hormones (80 aa).

3 cysteine pairs are disulfide-bonded: C13/C49, C29/C45, and C32/C58. Position 78 is a valine amide (V78).

It belongs to the arthropod CHH/MIH/GIH/VIH hormone family. Produced by the medulla terminalis X-organ in the eyestalks and transported to the sinus gland where they are stored and released.

It is found in the secreted. Its function is as follows. Hormone found in the sinus gland of isopods and decapods which controls the blood sugar level. Has a secretagogue action over the amylase released from the midgut gland. May act as a stress hormone and may be involved in the control of molting and reproduction. This chain is Crustacean hyperglycemic hormones, found in Penaeus vannamei (Whiteleg shrimp).